Reading from the N-terminus, the 444-residue chain is 3-isopropylmalate dehydratase large subunit (444 aa).

X348, C408, and X411 together coordinate [4Fe-4S] cluster. The interval 423-444 is disordered; it reads ERXXSHSNRNFEGRQGRGGRTH.

The protein belongs to the aconitase/IPM isomerase family. LeuC type 1 subfamily. Heterodimer of LeuC and LeuD. Requires [4Fe-4S] cluster as cofactor.

It catalyses the reaction (2R,3S)-3-isopropylmalate = (2S)-2-isopropylmalate. Its pathway is amino-acid biosynthesis; L-leucine biosynthesis; L-leucine from 3-methyl-2-oxobutanoate: step 2/4. In terms of biological role, catalyzes the isomerization between 2-isopropylmalate and 3-isopropylmalate, via the formation of 2-isopropylmaleate. This chain is 3-isopropylmalate dehydratase large subunit, found in Buchnera aphidicola subsp. Uroleucon rudbeckiae.